The sequence spans 580 residues: Glutamine--tRNA ligase (580 aa).

The 'HIGH' region signature appears at 41-51; that stretch reads PEPNGYLHIGH. ATP is bound by residues 42–44 and 48–54; these read EPN and HIGHAKA. Positions 74 and 218 each coordinate L-glutamine. ATP is bound by residues Thr237, 285–286, and 293–295; these read RL and MSK. Residues 292–296 carry the 'KMSKS' region motif; that stretch reads VMSKR.

Belongs to the class-I aminoacyl-tRNA synthetase family. As to quaternary structure, monomer.

The protein localises to the cytoplasm. It carries out the reaction tRNA(Gln) + L-glutamine + ATP = L-glutaminyl-tRNA(Gln) + AMP + diphosphate. The chain is Glutamine--tRNA ligase from Xylella fastidiosa (strain M12).